A 374-amino-acid chain; its full sequence is DNA replication and repair protein RecF (374 aa).

Position 30–37 (30–37 (GPNAQGKS)) interacts with ATP.

Belongs to the RecF family.

It localises to the cytoplasm. Functionally, the RecF protein is involved in DNA metabolism; it is required for DNA replication and normal SOS inducibility. RecF binds preferentially to single-stranded, linear DNA. It also seems to bind ATP. This is DNA replication and repair protein RecF from Acaryochloris marina (strain MBIC 11017).